The following is a 964-amino-acid chain: Integrator complex subunit 4 (964 aa).

K27 is modified (N6-acetyllysine). HEAT repeat units lie at residues 67-106, 146-184, 191-229, 230-264, 278-314, 370-406, 407-445, and 447-485; these read AESV…TAGF, QATQ…LEKS, GSAA…RGLK, LHQT…SQLY, IRLV…EQVS, NLIE…AQSS, PSFA…NITL, and EDQL…GIHL. A Glycyl lysine isopeptide (Lys-Gly) (interchain with G-Cter in SUMO1); alternate cross-link involves residue K792. A Glycyl lysine isopeptide (Lys-Gly) (interchain with G-Cter in SUMO2); alternate cross-link involves residue K792.

The protein belongs to the Integrator subunit 4 family. Component of the Integrator complex, composed of core subunits INTS1, INTS2, INTS3, INTS4, INTS5, INTS6, INTS7, INTS8, INTS9/RC74, INTS10, INTS11/CPSF3L, INTS12, INTS13, INTS14 and INTS15. The core complex associates with protein phosphatase 2A subunits PPP2CA and PPP2R1A, to form the Integrator-PP2A (INTAC) complex. INTS4 is part of the RNA endonuclease subcomplex, composed of INTS4, INTS9, INTS11 and inositol hexakisphosphate (InsP6). Interacts with BRAT1; interaction is required for the assembly of the RNA endonuclease subcomplex.

Its subcellular location is the nucleus. It is found in the cytoplasm. Functionally, component of the integrator complex, a multiprotein complex that terminates RNA polymerase II (Pol II) transcription in the promoter-proximal region of genes. The integrator complex provides a quality checkpoint during transcription elongation by driving premature transcription termination of transcripts that are unfavorably configured for transcriptional elongation: the complex terminates transcription by (1) catalyzing dephosphorylation of the C-terminal domain (CTD) of Pol II subunit POLR2A/RPB1 and SUPT5H/SPT5, (2) degrading the exiting nascent RNA transcript via endonuclease activity and (3) promoting the release of Pol II from bound DNA. The integrator complex is also involved in terminating the synthesis of non-coding Pol II transcripts, such as enhancer RNAs (eRNAs), small nuclear RNAs (snRNAs), telomerase RNAs and long non-coding RNAs (lncRNAs). Within the integrator complex, INTS4 acts as an scaffold that links INTS9 and INTS11. Mediates recruitment of cytoplasmic dynein to the nuclear envelope, probably as component of the integrator complex. The chain is Integrator complex subunit 4 (Ints4) from Mus musculus (Mouse).